The primary structure comprises 740 residues: Zinc finger CCCH domain-containing protein 14 (740 aa).

4 disordered regions span residues 82–240 (SNKQ…NIKG), 254–314 (VSAG…DDAV), 390–426 (ITPS…DDEE), and 444–469 (SFRD…HHST). Basic and acidic residues-rich tracts occupy residues 87-158 (ETSK…EIQR) and 176-185 (EHVRARGEKH). Residues 186–200 (DRHHHKDHRRGRSHE) show a composition bias toward basic residues. The span at 204–214 (ITSTIVRQASA) shows a compositional bias: polar residues. Positions 393-409 (SRDSTPTDDSPTMQKWN) are enriched in polar residues. Over residues 414–426 (IGDDSEESEDDEE) the composition is skewed to acidic residues. C3H1-type zinc fingers lie at residues 499–522 (HVKE…MHPT) and 523–543 (TNCK…IHPP). A disordered region spans residues 623–661 (IKKKPAPGAESEKKEEKSDENESKAEEPKAEVAPVQPKP). A compositionally biased stretch (basic and acidic residues) spans 632–652 (ESEKKEEKSDENESKAEEPKA). C3H1-type zinc fingers lie at residues 668–691 (LHSM…KHPK), 674–691 (CRYA…KHPK), and 693–709 (CRFG…FYHK).

The protein belongs to the ZC3H14 family.

Its subcellular location is the nucleus. The protein resides in the cytoplasm. RNA-binding protein involved in the biogenesis of circular RNAs (circRNAs), which are produced by back-splicing circularization of pre-mRNAs. The protein is Zinc finger CCCH domain-containing protein 14 (sut-2) of Caenorhabditis elegans.